The chain runs to 419 residues: Endochitinase 2 (419 aa).

Residues 1 to 18 form the signal peptide; the sequence is MHHLRALVGVGLAGLAAG. One can recognise a GH18 domain in the interval 35–343; the sequence is AQNVVYWGQN…QQAKSILVNG (309 aa). N-linked (GlcNAc...) asparagine glycosylation is present at Asn153. The active-site Proton donor is Glu173. Asn237 and Asn256 each carry an N-linked (GlcNAc...) asparagine glycan. The disordered stretch occupies residues 343–390; sequence GAPCPSSGPPSSTPATAPAPTATTMPSSTSVSSPTASPTGGTVPQWGQ. Positions 355–384 are enriched in low complexity; it reads TPATAPAPTATTMPSSTSVSSPTASPTGGT. Residues 383–419 enclose the CBM1 domain; sequence GTVPQWGQCGGEGYSGPTQCVPPYQCVKQGDWWSSCR.

This sequence belongs to the glycosyl hydrolase 18 family. Chitinase class III subfamily.

Its subcellular location is the secreted. It carries out the reaction Random endo-hydrolysis of N-acetyl-beta-D-glucosaminide (1-&gt;4)-beta-linkages in chitin and chitodextrins.. Secreted chitinase involved in the degradation of chitin, a component of the cell walls of fungi and exoskeletal elements of some animals (including worms and arthropods). Participates in the infection process and directly acts in the penetration process of the host cuticle. In Metarhizium anisopliae (Entomophthora anisopliae), this protein is Endochitinase 2 (chi2).